The sequence spans 418 residues: Putative ion-transport protein YfeO (418 aa).

12 consecutive transmembrane segments (helical) span residues 10 to 30 (LLLS…LIVV), 54 to 74 (DSPL…GLVI), 99 to 119 (ALPG…SLGP), 120 to 140 (EHPI…RLLP), 149 to 169 (ILAS…AALI), 186 to 206 (LFAP…FFHP), 223 to 243 (ILSG…AVWC), 258 to 278 (VLVL…GGPV), 300 to 320 (DYFL…ASGF), 322 to 342 (GGRI…LHEH), 343 to 363 (VPAV…VLVV), and 371 to 391 (LFMA…CIVM).

This sequence belongs to the chloride channel (TC 2.A.49) family.

The protein localises to the cell membrane. The protein is Putative ion-transport protein YfeO of Shigella boydii serotype 18 (strain CDC 3083-94 / BS512).